The following is a 230-amino-acid chain: Cytochrome c oxidase subunit 2 (230 aa).

Residues 1-26 (MATPAQLGLMDAASPVMEEMIYFHDH) are Mitochondrial intermembrane-facing. The chain crosses the membrane as a helical span at residues 27 to 48 (VMLVLILITCLIFYSMLVLISS). Residues 49 to 62 (KYIYRFLTDGHVIE) are Mitochondrial matrix-facing. A helical membrane pass occupies residues 63–82 (TVWTVIPAIILVVVALPSLK). The Mitochondrial intermembrane segment spans residues 83–230 (LLYLTDELDN…GWCDMMLDEE (148 aa)). Cu cation-binding residues include H161, C196, E198, C200, H204, and M207. E198 lines the Mg(2+) pocket.

It belongs to the cytochrome c oxidase subunit 2 family. In terms of assembly, component of the cytochrome c oxidase (complex IV, CIV), a multisubunit enzyme composed of a catalytic core of 3 subunits and several supernumerary subunits. The complex exists as a monomer or a dimer and forms supercomplexes (SCs) in the inner mitochondrial membrane with ubiquinol-cytochrome c oxidoreductase (cytochrome b-c1 complex, complex III, CIII). The cofactor is Cu cation.

The protein resides in the mitochondrion inner membrane. The catalysed reaction is 4 Fe(II)-[cytochrome c] + O2 + 8 H(+)(in) = 4 Fe(III)-[cytochrome c] + 2 H2O + 4 H(+)(out). Component of the cytochrome c oxidase, the last enzyme in the mitochondrial electron transport chain which drives oxidative phosphorylation. The respiratory chain contains 3 multisubunit complexes succinate dehydrogenase (complex II, CII), ubiquinol-cytochrome c oxidoreductase (cytochrome b-c1 complex, complex III, CIII) and cytochrome c oxidase (complex IV, CIV), that cooperate to transfer electrons derived from NADH and succinate to molecular oxygen, creating an electrochemical gradient over the inner membrane that drives transmembrane transport and the ATP synthase. Cytochrome c oxidase is the component of the respiratory chain that catalyzes the reduction of oxygen to water. Electrons originating from reduced cytochrome c in the intermembrane space (IMS) are transferred via the dinuclear copper A center (CU(A)) of subunit 2 and heme A of subunit 1 to the active site in subunit 1, a binuclear center (BNC) formed by heme A3 and copper B (CU(B)). The BNC reduces molecular oxygen to 2 water molecules using 4 electrons from cytochrome c in the IMS and 4 protons from the mitochondrial matrix. The sequence is that of Cytochrome c oxidase subunit 2 (COII) from Branchiostoma floridae (Florida lancelet).